The sequence spans 249 residues: Type III pantothenate kinase (249 aa).

An ATP-binding site is contributed by 6 to 13 (DCGNSFIK). Substrate is bound by residues Y93 and 100–103 (GLDR). The Proton acceptor role is filled by D102. D122 contacts K(+). T125 lines the ATP pocket. Substrate is bound at residue T181.

This sequence belongs to the type III pantothenate kinase family. Homodimer. The cofactor is NH4(+). Requires K(+) as cofactor.

It is found in the cytoplasm. It carries out the reaction (R)-pantothenate + ATP = (R)-4'-phosphopantothenate + ADP + H(+). It functions in the pathway cofactor biosynthesis; coenzyme A biosynthesis; CoA from (R)-pantothenate: step 1/5. In terms of biological role, catalyzes the phosphorylation of pantothenate (Pan), the first step in CoA biosynthesis. This chain is Type III pantothenate kinase, found in Pseudomonas fluorescens (strain Pf0-1).